Here is a 332-residue protein sequence, read N- to C-terminus: Glycerol-3-phosphate dehydrogenase [NAD(P)+] (332 aa).

NADPH-binding residues include serine 11, phenylalanine 12, lysine 32, and lysine 106. 3 residues coordinate sn-glycerol 3-phosphate: lysine 106, glycine 137, and serine 139. Alanine 141 lines the NADPH pocket. The sn-glycerol 3-phosphate site is built by lysine 192, aspartate 245, serine 255, arginine 256, and asparagine 257. Catalysis depends on lysine 192, which acts as the Proton acceptor. Arginine 256 contacts NADPH. Residues valine 280 and glutamate 282 each contribute to the NADPH site.

This sequence belongs to the NAD-dependent glycerol-3-phosphate dehydrogenase family.

Its subcellular location is the cytoplasm. The catalysed reaction is sn-glycerol 3-phosphate + NAD(+) = dihydroxyacetone phosphate + NADH + H(+). It catalyses the reaction sn-glycerol 3-phosphate + NADP(+) = dihydroxyacetone phosphate + NADPH + H(+). It functions in the pathway membrane lipid metabolism; glycerophospholipid metabolism. Catalyzes the reduction of the glycolytic intermediate dihydroxyacetone phosphate (DHAP) to sn-glycerol 3-phosphate (G3P), the key precursor for phospholipid synthesis. This Staphylococcus epidermidis (strain ATCC 12228 / FDA PCI 1200) protein is Glycerol-3-phosphate dehydrogenase [NAD(P)+].